The sequence spans 86 residues: Putative membrane protein insertion efficiency factor (86 aa).

It belongs to the UPF0161 family.

The protein localises to the cell inner membrane. Its function is as follows. Could be involved in insertion of integral membrane proteins into the membrane. The polypeptide is Putative membrane protein insertion efficiency factor (Cellvibrio japonicus (strain Ueda107) (Pseudomonas fluorescens subsp. cellulosa)).